A 628-amino-acid chain; its full sequence is Keratin, type II cytoskeletal 3 (628 aa).

The interval Met1–Ala21 is disordered. The tract at residues Met1–Gln197 is head. Phosphoserine occurs at positions 13 and 56. Residues Glu198 to Leu233 are coil 1A. The 316-residue stretch at Glu198–Met513 folds into the IF rod domain. The tract at residues Gln234 to His254 is linker 1. Residues Ile255–Met346 form a coil 1B region. Lys296 is modified (N6,N6-dimethyllysine). The tract at residues Gln347–Ile370 is linker 12. Phosphoserine is present on Ser364. The tract at residues Ile371–Glu509 is coil 2. The tract at residues Glu510–Arg628 is tail. A disordered region spans residues Ser605–Arg628. Over residues Ser617–Arg628 the composition is skewed to low complexity.

It belongs to the intermediate filament family. In terms of assembly, heterotetramer of two type I and two type II keratins. Keratin-3 associates with keratin-12. In terms of tissue distribution, cornea specific.

This is Keratin, type II cytoskeletal 3 (KRT3) from Homo sapiens (Human).